Reading from the N-terminus, the 304-residue chain is uncharacterized protein (304 aa).

The first 22 residues, 1–22, serve as a signal peptide directing secretion; sequence MKKSLTLLILLLCSLLFSTVLS. The disordered stretch occupies residues 91-111; sequence PAPAPTPESSDPDEPMKPDDS. N-linked (GlcNAc...) asparagine glycans are attached at residues Asn-133, Asn-160, Asn-183, and Asn-233. A lipid anchor (GPI-anchor amidated serine) is attached at Ser-282. Residues 283–304 constitute a propeptide, removed in mature form; that stretch reads SSHLFGVLPFLPLVLCIFLFLL.

The protein resides in the cell membrane. This is an uncharacterized protein from Arabidopsis thaliana (Mouse-ear cress).